Consider the following 147-residue polypeptide: 3-dehydroquinate dehydratase (147 aa).

Tyrosine 23 (proton acceptor) is an active-site residue. Asparagine 75, histidine 81, and aspartate 88 together coordinate substrate. Residue histidine 101 is the Proton donor of the active site. Substrate-binding positions include 102–103 and arginine 112; that span reads LS.

The protein belongs to the type-II 3-dehydroquinase family. Homododecamer.

It carries out the reaction 3-dehydroquinate = 3-dehydroshikimate + H2O. It participates in metabolic intermediate biosynthesis; chorismate biosynthesis; chorismate from D-erythrose 4-phosphate and phosphoenolpyruvate: step 3/7. Functionally, catalyzes a trans-dehydration via an enolate intermediate. The chain is 3-dehydroquinate dehydratase from Thioalkalivibrio sulfidiphilus (strain HL-EbGR7).